A 324-amino-acid polypeptide reads, in one-letter code: Phospho-N-acetylmuramoyl-pentapeptide-transferase (324 aa).

10 consecutive transmembrane segments (helical) span residues 5–25, 50–70, 77–97, 117–137, 147–167, 176–196, 203–223, 227–247, 250–270, and 302–322; these read VILF…PILI, GTPT…AIVM, LSAE…LGFL, LIGQ…CHFS, LSID…VGGS, LDGL…ILAW, VAIF…FNAH, VFMG…VAIL, LEIL…SVIL, and VVVT…YIEV.

It belongs to the glycosyltransferase 4 family. MraY subfamily. It depends on Mg(2+) as a cofactor.

It is found in the cell membrane. The catalysed reaction is UDP-N-acetyl-alpha-D-muramoyl-L-alanyl-gamma-D-glutamyl-meso-2,6-diaminopimeloyl-D-alanyl-D-alanine + di-trans,octa-cis-undecaprenyl phosphate = di-trans,octa-cis-undecaprenyl diphospho-N-acetyl-alpha-D-muramoyl-L-alanyl-D-glutamyl-meso-2,6-diaminopimeloyl-D-alanyl-D-alanine + UMP. It functions in the pathway cell wall biogenesis; peptidoglycan biosynthesis. Its function is as follows. Catalyzes the initial step of the lipid cycle reactions in the biosynthesis of the cell wall peptidoglycan: transfers peptidoglycan precursor phospho-MurNAc-pentapeptide from UDP-MurNAc-pentapeptide onto the lipid carrier undecaprenyl phosphate, yielding undecaprenyl-pyrophosphoryl-MurNAc-pentapeptide, known as lipid I. The sequence is that of Phospho-N-acetylmuramoyl-pentapeptide-transferase from Bacillus velezensis (strain DSM 23117 / BGSC 10A6 / LMG 26770 / FZB42) (Bacillus amyloliquefaciens subsp. plantarum).